The primary structure comprises 138 residues: Basic phospholipase A2 Mtx-b (138 aa).

Positions 1–16 (MRALWIVAVLLVGVEG) are cleaved as a signal peptide. 7 disulfides stabilise this stretch: cysteine 42–cysteine 131, cysteine 44–cysteine 60, cysteine 59–cysteine 111, cysteine 65–cysteine 138, cysteine 66–cysteine 104, cysteine 73–cysteine 97, and cysteine 91–cysteine 102. Positions 43, 45, and 47 each coordinate Ca(2+). Histidine 63 is a catalytic residue. Aspartate 64 contacts Ca(2+). The active site involves aspartate 105.

In terms of assembly, heterodimer of an acidic subunit and a basic chain. The acidic subunit is non-toxic, without enzymatic activity and comprises 3 peptides that are cross-linked by 7 disulfide bridges. The basic subunit is toxic, has phospholipase A2 activity and is composed of a single chain. It depends on Ca(2+) as a cofactor. In terms of tissue distribution, expressed by the venom gland.

It is found in the secreted. The catalysed reaction is a 1,2-diacyl-sn-glycero-3-phosphocholine + H2O = a 1-acyl-sn-glycero-3-phosphocholine + a fatty acid + H(+). Functionally, snake venom phospholipase A2 (PLA2) that inhibits neuromuscular transmission by blocking acetylcholine release from the nerve termini. PLA2 catalyzes the calcium-dependent hydrolysis of the 2-acyl groups in 3-sn-phosphoglycerides. The polypeptide is Basic phospholipase A2 Mtx-b (Crotalus scutulatus scutulatus (Mojave rattlesnake)).